A 248-amino-acid polypeptide reads, in one-letter code: Transcription factor MYBC1 (248 aa).

A DNA-binding region (myb-like GARP) is located at residues 102–161 (TLKRPRLVWTPQLHKRFVDAVGHLGIKNAVPKTIMQLMSVEGLTRENVASHLQKYRLYLR).

Expressed in roots, leaves, stems, petioles, filaments, stigma, pedicels, sepals, anthers, petals, and siliques.

Its subcellular location is the nucleus. Probable transcription factor that acts as a negative regulator of freezing tolerance via a CBF-independent pathway. The chain is Transcription factor MYBC1 from Arabidopsis thaliana (Mouse-ear cress).